The sequence spans 121 residues: Large ribosomal subunit protein bL12 (121 aa).

This sequence belongs to the bacterial ribosomal protein bL12 family. In terms of assembly, homodimer. Part of the ribosomal stalk of the 50S ribosomal subunit. Forms a multimeric L10(L12)X complex, where L10 forms an elongated spine to which 2 to 4 L12 dimers bind in a sequential fashion. Binds GTP-bound translation factors.

Its function is as follows. Forms part of the ribosomal stalk which helps the ribosome interact with GTP-bound translation factors. Is thus essential for accurate translation. The sequence is that of Large ribosomal subunit protein bL12 from Salmonella agona (strain SL483).